The following is a 1402-amino-acid chain: Phospholipid-transporting ATPase dnf2 (1402 aa).

The next 4 helical transmembrane spans lie at 109–129, 135–155, 457–477, and 501–521; these read FQNVANLFFLFLVILQSISIF, PGLAAVPLIVVVGITAVKDAI, LNFIILFSMCFVCAVVEGIAW, and VVTFFTGVILFQNLVPISLYI. The active-site 4-aspartylphosphate intermediate is the aspartate 569. ATP contacts are provided by aspartate 569, lysine 570, threonine 571, glutamate 700, phenylalanine 741, serine 743, lysine 746, lysine 764, arginine 799, threonine 800, threonine 879, glycine 880, aspartate 881, arginine 986, and lysine 992. Residue aspartate 569 coordinates Mg(2+). Threonine 571 is a binding site for Mg(2+). Aspartate 1012 contributes to the Mg(2+) binding site. Residues asparagine 1015 and aspartate 1016 each coordinate ATP. Position 1016 (aspartate 1016) interacts with Mg(2+). 6 consecutive transmembrane segments (helical) span residues 1066–1086, 1101–1121, 1151–1171, 1193–1213, 1218–1238, and 1260–1280; these read VAEMVNNFFYKSVVWTFTLFW, YTYVMLFNLIFSSLPVIVMGV, IFIGYMLDGFYQSVICFFFSF, LGVYVAAPTIMVVDTYVILNQ, VFSIGLWALSCLTFWFWTGVY, and FWAVLCGTIVSCLFPKFLFMT. Position 1275 (lysine 1275) interacts with a 1,2-diacyl-sn-glycero-3-phospho-L-serine.

Belongs to the cation transport ATPase (P-type) (TC 3.A.3) family. Type IV subfamily. Mg(2+) is required as a cofactor.

The protein localises to the cell membrane. It is found in the endoplasmic reticulum membrane. It carries out the reaction ATP + H2O + phospholipidSide 1 = ADP + phosphate + phospholipidSide 2.. The enzyme catalyses a 1,2-diacyl-sn-glycero-3-phosphoethanolamine(out) + ATP + H2O = a 1,2-diacyl-sn-glycero-3-phosphoethanolamine(in) + ADP + phosphate + H(+). It catalyses the reaction a 1,2-diacyl-sn-glycero-3-phosphocholine(out) + ATP + H2O = a 1,2-diacyl-sn-glycero-3-phosphocholine(in) + ADP + phosphate + H(+). The catalysed reaction is a beta-D-glucosyl-(1&lt;-&gt;1')-N-acylsphing-4-enine(out) + ATP + H2O = a beta-D-glucosyl-(1&lt;-&gt;1')-N-acylsphing-4-enine(in) + ADP + phosphate + H(+). It carries out the reaction a 1,2-diacyl-sn-glycero-3-phospho-L-serine(out) + ATP + H2O = a 1,2-diacyl-sn-glycero-3-phospho-L-serine(in) + ADP + phosphate + H(+). Its function is as follows. Catalytic component of a P4-ATPase flippase complex which catalyzes the hydrolysis of ATP coupled to the transport of glucosylceramide, phosphatidylcholine, phosphatidylethanolamine, and small amounts of phosphatidylserine from the lumenal to the cytosolic leaflet of the cell membrane and ensures the maintenance of asymmetric distribution of phospholipids. The protein is Phospholipid-transporting ATPase dnf2 of Schizosaccharomyces pombe (strain 972 / ATCC 24843) (Fission yeast).